The chain runs to 990 residues: Tyrosine-protein phosphatase 3 (990 aa).

Disordered stretches follow at residues 47–88, 100–193, 246–414, and 431–452; these read QSQS…SPSV, NKIN…SNIE, PNQQ…SFSQ, and KPEMASKKSHKHHQRHYSHNDL. Composition is skewed to low complexity over residues 52 to 88 and 100 to 117; these read NTNTNNINNSSSNINNNNNNTPDSMSMSTSLSSSPSV and NKINNNTTTNNNNNNNNN. Over residues 127 to 136 the composition is skewed to polar residues; that stretch reads LKLSNTMIIK. 5 stretches are compositionally biased toward low complexity: residues 137 to 191, 250 to 271, 278 to 293, 310 to 327, and 334 to 413; these read NNNN…SNSN, SSSSSSLSSTTTTTTTTSSSLL, NNSTYNNHHNNNNSSN, QAQVQLQQMQQQMQQHQQ, and NLSS…TSFS. In terms of domain architecture, Tyrosine-protein phosphatase spans 422 to 715; that stretch reads MRLEFEMIKK…IFIFKVINDV (294 aa). The span at 437-447 shows a compositional bias: basic residues; that stretch reads KKSHKHHQRHY. Cys-650 (phosphocysteine intermediate) is an active-site residue. Positions 786-795 are enriched in polar residues; that stretch reads PPQQQQDNPF. Disordered stretches follow at residues 786–814 and 834–990; these read PPQQQQDNPFSKSSIKISPSPLNSTNISI and LQQQ…IKCF. Composition is skewed to low complexity over residues 796-806 and 834-850; these read SKSSIKISPSP and LQQQQQQSSQQLNDNPP. Positions 851-868 are enriched in polar residues; sequence LNMSSNSIKFPPVTSLSS. Composition is skewed to low complexity over residues 878-916 and 924-968; these read NDNNNKQQQQQQQQQQKNNQQCSGFSHFLNNNNNNDNNG and GSFL…SDNN.

This sequence belongs to the protein-tyrosine phosphatase family. Non-receptor class subfamily. In the anterior-like and prestalk cell types.

It is found in the cytoplasm. It carries out the reaction O-phospho-L-tyrosyl-[protein] + H2O = L-tyrosyl-[protein] + phosphate. Functionally, seems to dephosphorylate a protein of 130 kDa (p130). The chain is Tyrosine-protein phosphatase 3 (ptpC) from Dictyostelium discoideum (Social amoeba).